The sequence spans 233 residues: Germin-like protein (233 aa).

A signal peptide spans 1-22 (MEAYKMFAFVVLLATTLYQAYA). C32 and C49 are oxidised to a cystine. The 153-residue stretch at 63-215 (RGLNMPANTD…RPSISMRIWS (153 aa)) folds into the Cupin type-1 domain. The Mn(2+) site is built by H111, H113, E118, and H162.

This sequence belongs to the germin family. Oligomer (believed to be a pentamer but probably hexamer). In terms of tissue distribution, expressed at high levels in unstressed roots.

The protein resides in the secreted. Its subcellular location is the extracellular space. It is found in the apoplast. Its function is as follows. May be involved in seed germination. In Mesembryanthemum crystallinum (Common ice plant), this protein is Germin-like protein.